Reading from the N-terminus, the 214-residue chain is Probable GTP-binding protein EngB (214 aa).

One can recognise an EngB-type G domain in the interval 30–204 (EGFEVAFAGR…YTVLAGWMEL (175 aa)). GTP contacts are provided by residues 38 to 45 (GRSNAGKS), 64 to 68 (GRTQL), 82 to 85 (DLPG), 149 to 152 (TKAD), and 182 to 185 (LFSA). Positions 45 and 66 each coordinate Mg(2+).

This sequence belongs to the TRAFAC class TrmE-Era-EngA-EngB-Septin-like GTPase superfamily. EngB GTPase family. Mg(2+) serves as cofactor.

Necessary for normal cell division and for the maintenance of normal septation. The polypeptide is Probable GTP-binding protein EngB (Pseudomonas fluorescens (strain Pf0-1)).